Consider the following 427-residue polypeptide: MKIKTISGAERLSLKRSIDAGTEEQRKTVRSIIEDVKANGDQAVRSYTAKFDCIEIDSPLVTKEEFEEAYTSLDSRLLQVIRQAIENIREYHERQLQSSWFYHRKDGTMLGQKVTALDSAGVYVPGGTAAYPSSVLMNVIPALVAGVERIVLVTPPGKDGLLSPGVLVAAAELGIKDIYKMGGAQAIAALAYGTETIEPVDKITGPGNIYVALAKREVFGDVDIDMIAGPSEIVVLADETAIPSEIAADLLSQAEHDKLSSCVFVTDSMALAETVSAEVNKQLETLPRREIAEASVRDYGCIYVAETMVEAIETVNTLAPEHLEIITQSPEALLGSIKHAGAIFLGRYSPEPVGDYFAGPNHVLPTNGTARFSSPLNVTDFQKKSSIISYSQSAFEEHAESIAAFARLEGLEAHARSIEARERRISK.

Residues Y123, Q185, and N208 each contribute to the NAD(+) site. Substrate is bound by residues S231, Q253, and H256. Residues Q253 and H256 each contribute to the Zn(2+) site. Active-site proton acceptor residues include E321 and H322. Substrate is bound by residues H322, D355, E409, and H414. D355 contributes to the Zn(2+) binding site. H414 contributes to the Zn(2+) binding site.

The protein belongs to the histidinol dehydrogenase family. It depends on Zn(2+) as a cofactor.

It catalyses the reaction L-histidinol + 2 NAD(+) + H2O = L-histidine + 2 NADH + 3 H(+). Its pathway is amino-acid biosynthesis; L-histidine biosynthesis; L-histidine from 5-phospho-alpha-D-ribose 1-diphosphate: step 9/9. Functionally, catalyzes the sequential NAD-dependent oxidations of L-histidinol to L-histidinaldehyde and then to L-histidine. The sequence is that of Histidinol dehydrogenase (hisD) from Bacillus subtilis (strain 168).